Consider the following 304-residue polypeptide: Non-specific ribonucleoside hydrolase RihC (304 aa).

Residue His-233 is part of the active site.

It belongs to the IUNH family. RihC subfamily.

Its function is as follows. Hydrolyzes both purine and pyrimidine ribonucleosides with a broad-substrate specificity. The protein is Non-specific ribonucleoside hydrolase RihC of Escherichia coli O6:H1 (strain CFT073 / ATCC 700928 / UPEC).